We begin with the raw amino-acid sequence, 237 residues long: Uridylate kinase (237 aa).

12–15 lines the ATP pocket; the sequence is KLSG. The interval 20–25 is involved in allosteric activation by GTP; sequence GAEGFG. Gly54 provides a ligand contact to UMP. ATP-binding residues include Gly55 and Arg59. Residues Asp74 and 135–142 contribute to the UMP site; that span reads TGSPFFTT. Residues Thr162, Tyr168, and Asp171 each contribute to the ATP site.

This sequence belongs to the UMP kinase family. As to quaternary structure, homohexamer.

Its subcellular location is the cytoplasm. The enzyme catalyses UMP + ATP = UDP + ADP. It participates in pyrimidine metabolism; CTP biosynthesis via de novo pathway; UDP from UMP (UMPK route): step 1/1. Allosterically activated by GTP. Inhibited by UTP. Catalyzes the reversible phosphorylation of UMP to UDP. This is Uridylate kinase from Actinobacillus succinogenes (strain ATCC 55618 / DSM 22257 / CCUG 43843 / 130Z).